We begin with the raw amino-acid sequence, 297 residues long: tRNA dimethylallyltransferase (297 aa).

Residue 10-17 coordinates ATP; it reads GITASGKS. 12-17 is a binding site for substrate; the sequence is TASGKS. Positions 36–39 are interaction with substrate tRNA; sequence DSKQ.

The protein belongs to the IPP transferase family. Monomer. Mg(2+) serves as cofactor.

It carries out the reaction adenosine(37) in tRNA + dimethylallyl diphosphate = N(6)-dimethylallyladenosine(37) in tRNA + diphosphate. In terms of biological role, catalyzes the transfer of a dimethylallyl group onto the adenine at position 37 in tRNAs that read codons beginning with uridine, leading to the formation of N6-(dimethylallyl)adenosine (i(6)A). In Wolbachia pipientis subsp. Culex pipiens (strain wPip), this protein is tRNA dimethylallyltransferase.